The sequence spans 207 residues: Putative 3-methyladenine DNA glycosylase (207 aa).

Over residues 182–193 (PAPAGARAARAP) the composition is skewed to low complexity. Positions 182 to 207 (PAPAGARAARAPAPAPRPRRPRGSGP) are disordered. A compositionally biased stretch (basic residues) spans 198–207 (RPRRPRGSGP).

This sequence belongs to the DNA glycosylase MPG family.

The chain is Putative 3-methyladenine DNA glycosylase from Anaeromyxobacter dehalogenans (strain 2CP-C).